The primary structure comprises 162 residues: Crossover junction endodeoxyribonuclease RuvC (162 aa).

Residues Asp-7, Glu-67, and Asp-140 contribute to the active site. 3 residues coordinate Mg(2+): Asp-7, Glu-67, and Asp-140.

Belongs to the RuvC family. Homodimer which binds Holliday junction (HJ) DNA. The HJ becomes 2-fold symmetrical on binding to RuvC with unstacked arms; it has a different conformation from HJ DNA in complex with RuvA. In the full resolvosome a probable DNA-RuvA(4)-RuvB(12)-RuvC(2) complex forms which resolves the HJ. The cofactor is Mg(2+).

It localises to the cytoplasm. It catalyses the reaction Endonucleolytic cleavage at a junction such as a reciprocal single-stranded crossover between two homologous DNA duplexes (Holliday junction).. In terms of biological role, the RuvA-RuvB-RuvC complex processes Holliday junction (HJ) DNA during genetic recombination and DNA repair. Endonuclease that resolves HJ intermediates. Cleaves cruciform DNA by making single-stranded nicks across the HJ at symmetrical positions within the homologous arms, yielding a 5'-phosphate and a 3'-hydroxyl group; requires a central core of homology in the junction. The consensus cleavage sequence is 5'-(A/T)TT(C/G)-3'. Cleavage occurs on the 3'-side of the TT dinucleotide at the point of strand exchange. HJ branch migration catalyzed by RuvA-RuvB allows RuvC to scan DNA until it finds its consensus sequence, where it cleaves and resolves the cruciform DNA. The polypeptide is Crossover junction endodeoxyribonuclease RuvC (Wolinella succinogenes (strain ATCC 29543 / DSM 1740 / CCUG 13145 / JCM 31913 / LMG 7466 / NCTC 11488 / FDC 602W) (Vibrio succinogenes)).